Here is a 121-residue protein sequence, read N- to C-terminus: UPF0102 protein DehaBAV1_0707 (121 aa).

It belongs to the UPF0102 family.

The polypeptide is UPF0102 protein DehaBAV1_0707 (Dehalococcoides mccartyi (strain ATCC BAA-2100 / JCM 16839 / KCTC 5957 / BAV1)).